The primary structure comprises 360 residues: Peptide chain release factor 1 (360 aa).

An N5-methylglutamine modification is found at Gln-235.

This sequence belongs to the prokaryotic/mitochondrial release factor family. In terms of processing, methylated by PrmC. Methylation increases the termination efficiency of RF1.

Its subcellular location is the cytoplasm. Its function is as follows. Peptide chain release factor 1 directs the termination of translation in response to the peptide chain termination codons UAG and UAA. The protein is Peptide chain release factor 1 of Delftia acidovorans (strain DSM 14801 / SPH-1).